Consider the following 466-residue polypeptide: 3-isopropylmalate dehydratase large subunit (466 aa).

[4Fe-4S] cluster contacts are provided by Cys347, Cys407, and Cys410.

This sequence belongs to the aconitase/IPM isomerase family. LeuC type 1 subfamily. Heterodimer of LeuC and LeuD. Requires [4Fe-4S] cluster as cofactor.

The enzyme catalyses (2R,3S)-3-isopropylmalate = (2S)-2-isopropylmalate. It participates in amino-acid biosynthesis; L-leucine biosynthesis; L-leucine from 3-methyl-2-oxobutanoate: step 2/4. In terms of biological role, catalyzes the isomerization between 2-isopropylmalate and 3-isopropylmalate, via the formation of 2-isopropylmaleate. The polypeptide is 3-isopropylmalate dehydratase large subunit (Blochmanniella pennsylvanica (strain BPEN)).